The following is a 229-amino-acid chain: Flagellar L-ring protein (229 aa).

The N-terminal stretch at 1 to 25 (MKQVRLLPSAPVRAVCALAVAALAG) is a signal peptide. C26 is lipidated: N-palmitoyl cysteine. The S-diacylglycerol cysteine moiety is linked to residue C26.

It belongs to the FlgH family. As to quaternary structure, the basal body constitutes a major portion of the flagellar organelle and consists of four rings (L,P,S, and M) mounted on a central rod.

It is found in the cell outer membrane. The protein resides in the bacterial flagellum basal body. In terms of biological role, assembles around the rod to form the L-ring and probably protects the motor/basal body from shearing forces during rotation. The polypeptide is Flagellar L-ring protein (Burkholderia ambifaria (strain MC40-6)).